The sequence spans 103 residues: Large ribosomal subunit protein uL24 (103 aa).

Belongs to the universal ribosomal protein uL24 family. In terms of assembly, part of the 50S ribosomal subunit.

Its function is as follows. One of two assembly initiator proteins, it binds directly to the 5'-end of the 23S rRNA, where it nucleates assembly of the 50S subunit. Functionally, one of the proteins that surrounds the polypeptide exit tunnel on the outside of the subunit. The sequence is that of Large ribosomal subunit protein uL24 from Glaesserella parasuis serovar 5 (strain SH0165) (Haemophilus parasuis).